The sequence spans 86 residues: Large ribosomal subunit protein bL31B (86 aa).

The protein belongs to the bacterial ribosomal protein bL31 family. Type B subfamily. Part of the 50S ribosomal subunit.

The chain is Large ribosomal subunit protein bL31B from Salmonella arizonae (strain ATCC BAA-731 / CDC346-86 / RSK2980).